The sequence spans 559 residues: DNA ligase (559 aa).

Glu248 contacts ATP. Catalysis depends on Lys250, which acts as the N6-AMP-lysine intermediate. ATP contacts are provided by Arg255, Arg270, Glu300, Phe341, Arg417, and Lys423.

The protein belongs to the ATP-dependent DNA ligase family. The cofactor is Mg(2+).

The catalysed reaction is ATP + (deoxyribonucleotide)n-3'-hydroxyl + 5'-phospho-(deoxyribonucleotide)m = (deoxyribonucleotide)n+m + AMP + diphosphate.. Functionally, DNA ligase that seals nicks in double-stranded DNA during DNA replication, DNA recombination and DNA repair. This chain is DNA ligase, found in Methanopyrus kandleri (strain AV19 / DSM 6324 / JCM 9639 / NBRC 100938).